A 292-amino-acid chain; its full sequence is MNSVTTSTIGRLAFGVSRLSAVTNVAGAVRHASTHPTTAIPKPTTAVLKTSPLAEETAVELKSPSRLQLKSEPGNKGNPKGHGDRIWAFHHIEQGQVIYSTKPVISHQHLIRQQPFTGKNLVPRKIRKDYWRPLAMIELAGKDQGAVGRSVYQKLREFKKRHELDWANEAEEGRKLMHKSKRERGQELNDQKPNSVADMAAVLAGAGKGNLMWQVSRLGSSSELVGEIKKASGAVEKGAVVDVKRQLRRATVYWTNEQDKFHAREWSDNVSHEVGIPGEAEKKRMPIRMSSE.

The tract at residues 59–83 (VELKSPSRLQLKSEPGNKGNPKGHG) is disordered.

Belongs to the mitochondrion-specific ribosomal protein mL67 family. As to quaternary structure, component of the mitochondrial large ribosomal subunit (mt-LSU). Mature N.crassa 74S mitochondrial ribosomes consist of a small (37S) and a large (54S) subunit. The 37S small subunit contains a 16S ribosomal RNA (16S mt-rRNA) and 32 different proteins. The 54S large subunit contains a 23S rRNA (23S mt-rRNA) and 42 different proteins.

It is found in the mitochondrion. In terms of biological role, component of the mitochondrial ribosome (mitoribosome), a dedicated translation machinery responsible for the synthesis of mitochondrial genome-encoded proteins, including at least some of the essential transmembrane subunits of the mitochondrial respiratory chain. The mitoribosomes are attached to the mitochondrial inner membrane and translation products are cotranslationally integrated into the membrane. mL67/MHR1 also has extraribosomal functions, being involved in regulation of mitochondrial DNA recombination, maintenance and repair, and generation of homoplasmic cells. mL67/MHR1 also acts as a transcription factor involved in regulation of RNA polymerase II-dependent transcription. The sequence is that of Large ribosomal subunit protein mL67 (mhr1) from Neurospora crassa (strain ATCC 24698 / 74-OR23-1A / CBS 708.71 / DSM 1257 / FGSC 987).